Here is a 434-residue protein sequence, read N- to C-terminus: Adenylosuccinate synthetase (434 aa).

GTP is bound by residues 25–31 and 53–55; these read GDEGKGK and GHT. Catalysis depends on Asp26, which acts as the Proton acceptor. The Mg(2+) site is built by Asp26 and Gly53. IMP contacts are provided by residues 26 to 29, 51 to 54, Thr142, Arg156, Asn233, Thr248, and Arg312; these read DEGK and NAGH. His54 functions as the Proton donor in the catalytic mechanism. Substrate is bound at residue 308 to 314; it reads VTTGRKR. Residues Arg314, 340-342, and 422-424 contribute to the GTP site; these read KLD and GVG.

Belongs to the adenylosuccinate synthetase family. In terms of assembly, homodimer. Mg(2+) serves as cofactor.

The protein localises to the cytoplasm. The catalysed reaction is IMP + L-aspartate + GTP = N(6)-(1,2-dicarboxyethyl)-AMP + GDP + phosphate + 2 H(+). Its pathway is purine metabolism; AMP biosynthesis via de novo pathway; AMP from IMP: step 1/2. Plays an important role in the de novo pathway and in the salvage pathway of purine nucleotide biosynthesis. Catalyzes the first committed step in the biosynthesis of AMP from IMP. The protein is Adenylosuccinate synthetase of Schizosaccharomyces japonicus (strain yFS275 / FY16936) (Fission yeast).